A 119-amino-acid polypeptide reads, in one-letter code: Small ribosomal subunit protein uS10 (119 aa).

Ala-2 carries the post-translational modification N-acetylalanine. Residue Lys-4 forms a Glycyl lysine isopeptide (Lys-Gly) (interchain with G-Cter in ubiquitin) linkage. Lys-8 bears the N6-succinyllysine; alternate mark. Lys-8 is covalently cross-linked (Glycyl lysine isopeptide (Lys-Gly) (interchain with G-Cter in ubiquitin); alternate). The residue at position 9 (Thr-9) is a Phosphothreonine. Residues Lys-34 and Lys-75 each carry the N6-acetyllysine modification. Ser-93 carries the post-translational modification Phosphoserine.

The protein belongs to the universal ribosomal protein uS10 family. Component of the 40S small ribosomal subunit. Post-translationally, polyubiquitinated by ZNF598 via 'Lys-63'-linked ubiquitin chains when a ribosome has stalled, initiating the ribosome quality control (RQC) pathway to degrade the potentially detrimental aberrant nascent polypeptide. Deubiquitinated by OTUD3 and USP21, antagonizing ZNF598 activity. In terms of processing, ufmylated by UFL1.

It localises to the cytoplasm. Functionally, component of the small ribosomal subunit. The ribosome is a large ribonucleoprotein complex responsible for the synthesis of proteins in the cell. The sequence is that of Small ribosomal subunit protein uS10 (Rps20) from Rattus norvegicus (Rat).